The following is a 717-amino-acid chain: Probable metal-nicotianamine transporter YSL12 (717 aa).

Positions Met1–Val56 are disordered. A run of 14 helical transmembrane segments spans residues Ala76–Leu96, Gly99–Trp119, Cys144–Met164, Ile186–Pro206, Leu248–Gly268, Ile306–Ile326, Val351–Ile371, Val422–Phe442, Ile450–Leu470, Leu482–Leu502, Phe536–Leu556, Leu593–Leu613, Phe636–Trp656, and Val671–Leu691.

The protein belongs to the YSL (TC 2.A.67.2) family. Expressed in root cortex and stele.

It localises to the membrane. Functionally, may be involved in the transport of nicotianamine-chelated metals. The protein is Probable metal-nicotianamine transporter YSL12 (YSL12) of Oryza sativa subsp. japonica (Rice).